The sequence spans 1024 residues: MPAARPPAAGLRGISLFLALLLGSPAAALERDALPEGDASPLGPYLLPSGAPERGSPGKEHPEERVVTAPPSSSQSAEVLGELVLDGTAPSAHHDIPALSPLLPEEARPKHALPPKKKLPSLKQVNSARKQLRPKATSAATVQRAGSQPASQGLDLLSSSTEKPGPPGDPDPIVASEEASEVPLWLDRKESAVPTTPAPLQISPFTSQPYVAHTLPQRPEPGEPGPDMAQEAPQEDTSPMALMDKGENELTGSASEESQETTTSTIITTTVITTEQAPALCSVSFSNPEGYIDSSDYPLLPLNNFLECTYNVTVYTGYGVELQVKSVNLSDGELLSIRGVDGPTLTVLANQTLLVEGQVIRSPTNTISVYFRTFQDDGLGTFQLHYQAFMLSCNFPRRPDSGDVTVMDLHSGGVAHFHCHLGYELQGAKMLTCINASKPHWSSQEPICSAPCGGAVHNATIGRVLSPSYPENTNGSQFCIWTIEAPEGQKLHLHFERLLLHDKDRMTVHSGQTNKSALLYDSLQTESVPFEGLLSEGNTIRIEFTSDQARAASTFNIRFEAFEKGHCYEPYIQNGNFTTSDPTYNIGTIVEFTCDPGHSLEQGPAIIECINVRDPYWNDTEPLCRAMCGGELSAVAGVVLSPNWPEPYVEGEDCIWKIHVGEEKRIFLDIQFLNLSNSDILTIYDGDEVMPHILGQYLGNSGPQKLYSSTPDLTIQFHSDPAGLIFGKGQGFIMNYIEVSRNDSCSDLPEIQNGWKTTSHTELVRGARITYQCDPGYDIVGSDTLTCQWDLSWSSDPPFCEKIMYCTDPGEVDHSTRLISDPVLLVGTTIQYTCNPGFVLEGSSLLTCYSRETGTPIWTSRLPHCVSEESLACDNPGLPENGYQILYKRLYLPGESLTFMCYEGFELMGEVTIRCILGQPSHWNGPLPVCKVNQDSFEHALEVAEAAAETSLEGGNMALAIFIPVLIISLLLGGAYIYITRCRYYSNLRLPLMYSHPYSQITVETEFDNPIYETGETREYEVSI.

The signal sequence occupies residues 1–28; sequence MPAARPPAAGLRGISLFLALLLGSPAAA. Residues 29-958 lie on the Extracellular side of the membrane; that stretch reads LERDALPEGD…ETSLEGGNMA (930 aa). Disordered stretches follow at residues 33-77, 108-184, and 212-234; these read ALPE…SQSA, RPKH…EVPL, and AHTLPQRPEPGEPGPDMAQEAPQ. O-linked (GalNAc...) serine glycosylation occurs at Ser-49. Over residues 56-66 the composition is skewed to basic and acidic residues; that stretch reads SPGKEHPEERV. Residues 110–120 are compositionally biased toward basic residues; sequence KHALPPKKKLP. The span at 138–162 shows a compositional bias: polar residues; sequence SAATVQRAGSQPASQGLDLLSSSTE. O-glycosylated at one site regions lie at residues 147 to 161 and 176 to 180; these read SQPASQGLDLLSSST and SEEAS. A disulfide bond links Cys-281 and Cys-308. Residues 281–389 enclose the CUB 1 domain; the sequence is CSVSFSNPEG…GTFQLHYQAF (109 aa). Residues Asn-311, Asn-328, and Asn-350 are each glycosylated (N-linked (GlcNAc...) asparagine). A Sushi 1 domain is found at 391 to 450; sequence LSCNFPRRPDSGDVTVMDLHSGGVAHFHCHLGYELQGAKMLTCINASKPHWSSQEPICSA. 2 disulfides stabilise this stretch: Cys-393–Cys-433 and Cys-419–Cys-448. Asn-435, Asn-458, Asn-474, Asn-514, Asn-576, Asn-618, Asn-674, and Asn-742 each carry an N-linked (GlcNAc...) asparagine glycan. The CUB 2 domain occupies 452–562; sequence CGGAVHNATI…STFNIRFEAF (111 aa). One can recognise a Sushi 2 domain in the interval 565–626; the sequence is GHCYEPYIQN…WNDTEPLCRA (62 aa). Cystine bridges form between Cys-567/Cys-609 and Cys-594/Cys-624. The region spanning 628-739 is the CUB 3 domain; it reads CGGELSAVAG…QGFIMNYIEV (112 aa). Sushi domains follow at residues 743–802, 804–867, and 871–932; these read DSCS…FCEK, MYCT…HCVS, and LACD…VCKV. 6 disulfides stabilise this stretch: Cys-745–Cys-787, Cys-773–Cys-800, Cys-806–Cys-848, Cys-834–Cys-865, Cys-873–Cys-915, and Cys-901–Cys-930. Residues 959-979 form a helical membrane-spanning segment; the sequence is LAIFIPVLIISLLLGGAYIYI. The Cytoplasmic portion of the chain corresponds to 980–1024; that stretch reads TRCRYYSNLRLPLMYSHPYSQITVETEFDNPIYETGETREYEVSI.

Belongs to the SEZ6 family. O-glycosylated. In terms of tissue distribution, widely expressed, including adult and fetal brains and lungs. Not expressed in all lung cancer cell lines.

The protein localises to the endoplasmic reticulum membrane. May contribute to specialized endoplasmic reticulum functions in neurons. In Homo sapiens (Human), this protein is Seizure 6-like protein (SEZ6L).